Here is a 216-residue protein sequence, read N- to C-terminus: MSNLHKFKAYFGMVPLDDYEDEYVEEPDQARRAPRRSHDGYAERDDREFVEPAFSKASYAPSRRDEEDAEFDRYDSRPRVDTVPSRSSRPAMAPRPASRGNLAVDARAERPEARRAPVVDDGGPLAKITTLRPQSYAEARTIGERFRDGTPVIMDLVDMSNADAKRLVDFAAGLAFALRGSFDKVATKVFLLSPADIDVSAEERRRIAETGFYSQK.

Residues 22–126 (EYVEEPDQAR…PVVDDGGPLA (105 aa)) are disordered. Composition is skewed to basic and acidic residues over residues 28–50 (DQAR…REFV), 62–80 (SRRD…RPRV), and 106–118 (ARAE…RAPV).

It belongs to the SepF family. In terms of assembly, homodimer. Interacts with FtsZ.

The protein localises to the cytoplasm. Functionally, cell division protein that is part of the divisome complex and is recruited early to the Z-ring. Probably stimulates Z-ring formation, perhaps through the cross-linking of FtsZ protofilaments. Its function overlaps with FtsA. This is Cell division protein SepF from Rhodococcus erythropolis (strain PR4 / NBRC 100887).